Reading from the N-terminus, the 320-residue chain is MGEQQQQVERQPDLPPGFRFHPTDEEIITFYLAPKVVDSRGFCVAAIGEVDLNKCEPWDLPGKAKMNGEKEWYFYCQKDRKYPTGMRTNRATEAGYWKATGKDKEIFRDHHMLIGMKKTLVFYKGRAPKGDKTNWVMHEYRLADASPPPPPSSAEPPRQDDWAVCRIFHKSSGIKKPVPVAPHQVPAAANYQQQQQMAMASAGIIQVPMQMQMPSMSDQLQMLDDFSTTASLSLMAPPSYSTLPAGFPLQINSGAHPQQFVGNPSMYYHQQQQMDMAGGGFVVSEPSSLVVSPQDAADQNNNAADISSMACNMDAAIWKY.

The 157-residue stretch at 14-170 (LPPGFRFHPT…DWAVCRIFHK (157 aa)) folds into the NAC domain. Residues 114–176 (IGMKKTLVFY…IFHKSSGIKK (63 aa)) mediate DNA binding.

Forms homodimers. Forms heterodimers with NAC26. Expressed in developing seeds. Expressed in developing endosperm.

It localises to the nucleus. The protein resides in the endoplasmic reticulum. Functionally, transcription factor that acts redundantly with NAC26 to regulate the expression of genes involved in the biosynthesis of starch and storage proteins in grain. Directly binds to the promoters of starch synthase 1 (SS1), pullulanase (PUL), glutelin A1 (GLUA1), glutelins B4 and B5 (GLUB4 and GLUB5), alpha-globulin and 16 kDa prolamin, and activates their expression. The sequence is that of NAC domain-containing protein 20 from Oryza sativa subsp. japonica (Rice).